A 551-amino-acid polypeptide reads, in one-letter code: Urocanate hydratase (551 aa).

NAD(+) is bound by residues 48–49 (GG), Q126, 172–174 (GMG), E192, R197, 238–239 (NA), 259–263 (QTSAH), 269–270 (YI), and Y318. C406 is an active-site residue. G488 serves as a coordination point for NAD(+).

It belongs to the urocanase family. Requires NAD(+) as cofactor.

It localises to the cytoplasm. The enzyme catalyses 4-imidazolone-5-propanoate = trans-urocanate + H2O. Its pathway is amino-acid degradation; L-histidine degradation into L-glutamate; N-formimidoyl-L-glutamate from L-histidine: step 2/3. Functionally, catalyzes the conversion of urocanate to 4-imidazolone-5-propionate. The polypeptide is Urocanate hydratase (Symbiobacterium thermophilum (strain DSM 24528 / JCM 14929 / IAM 14863 / T)).